A 347-amino-acid chain; its full sequence is MNERIVVAVDAMGGDNAPEVEVEGAVAAARRWKIPIVLVGDQGRLDAVLSRYDLKGLDIAIRHATEVVGMHDSPSDAVRKKKDSSIRVAFDLLRGNEVQAVVSAGNSGATMAVGMFLCKRIPGIDRPAIATILPNKKSQTVLLDGGANVDCKPFHLSQFGTMGAVYAKFMLGKERPRVGVLSNGEEESKGNELAREAHKLLKQSSLNYIGFVEGRDIFSGDVDVVVCDGFVGNVVLKVSEGLSEAISDMLRGEIKQRLFAKLGYLLARPAFRAFKKKVDYAEYGGAPLLGIQGTGMICHGGSNARAIMNAIHMARESVSQRINDRLIAQLGMENPELSDDVVKRGAS.

This sequence belongs to the PlsX family. Homodimer. Probably interacts with PlsY.

The protein localises to the cytoplasm. It catalyses the reaction a fatty acyl-[ACP] + phosphate = an acyl phosphate + holo-[ACP]. Its pathway is lipid metabolism; phospholipid metabolism. Its function is as follows. Catalyzes the reversible formation of acyl-phosphate (acyl-PO(4)) from acyl-[acyl-carrier-protein] (acyl-ACP). This enzyme utilizes acyl-ACP as fatty acyl donor, but not acyl-CoA. This is Phosphate acyltransferase from Syntrophotalea carbinolica (strain DSM 2380 / NBRC 103641 / GraBd1) (Pelobacter carbinolicus).